The primary structure comprises 237 residues: Histone H1E (237 aa).

Residues 1–21 (MSDPAQEVEAPVEAAPVASSP) show a composition bias toward low complexity. Disordered regions lie at residues 1–56 (MSDP…PVSE) and 109–237 (LQAK…KKAK). Basic and acidic residues predominate over residues 26–42 (EKAPKAPKAEKPKSDKP). Residues 50 to 124 (THPPVSEMVV…GASGSFKLPP (75 aa)) form the H15 domain. Residues 182 to 195 (AKPAAKKAAAPKPK) are compositionally biased toward low complexity. Residues 200–209 (PKKEVKPKKE) show a composition bias toward basic and acidic residues. Residues 210 to 237 (AKPKKAAAKPAKKPAAKPAKKPAAKKAK) are compositionally biased toward basic residues.

The protein belongs to the histone H1/H5 family.

The protein localises to the nucleus. It localises to the chromosome. Functionally, histones H1 are necessary for the condensation of nucleosome chains into higher-order structures. This is Histone H1E from Chironomus tentans (Midge).